A 62-amino-acid polypeptide reads, in one-letter code: Cuticle protein 6.4 (62 aa).

Functionally, component of the cuticle of migratory locust which contains more than 100 different structural proteins. The chain is Cuticle protein 6.4 from Locusta migratoria (Migratory locust).